Reading from the N-terminus, the 512-residue chain is Hyaluronidase PH-20 (512 aa).

Residues 1 to 35 (MGELRFKHLFWGSFVESGGTFQTVLIFLLIPCSLT) form the signal peptide. N-linked (GlcNAc...) asparagine glycosylation is present at N46. Cystine bridges form between C60–C351 and C223–C237. The active-site Proton donor is E147. The N-linked (GlcNAc...) asparagine glycan is linked to N165. 2 N-linked (GlcNAc...) asparagine glycosylation sites follow: N293 and N368. 3 cysteine pairs are disulfide-bonded: C376–C387, C381–C435, and C437–C464.

The protein belongs to the glycosyl hydrolase 56 family.

The protein resides in the cell membrane. It carries out the reaction Random hydrolysis of (1-&gt;4)-linkages between N-acetyl-beta-D-glucosamine and D-glucuronate residues in hyaluronate.. In terms of biological role, involved in sperm-egg adhesion. Upon fertilization sperm must first penetrate a layer of cumulus cells that surrounds the egg before reaching the zona pellucida. The cumulus cells are embedded in a matrix containing hyaluronic acid which is formed prior to ovulation. This protein aids in penetrating the layer of cumulus cells by digesting hyaluronic acid. This is Hyaluronidase PH-20 (Spam1) from Mus musculus (Mouse).